The following is a 110-amino-acid chain: Iron-sulfur cluster assembly protein CyaY (110 aa).

The protein belongs to the frataxin family.

Functionally, involved in iron-sulfur (Fe-S) cluster assembly. May act as a regulator of Fe-S biogenesis. In Pseudomonas entomophila (strain L48), this protein is Iron-sulfur cluster assembly protein CyaY.